The following is a 141-amino-acid chain: MSIVIGADAAGLRLKEVVKDFLEKENFHLVDVTAEGQDFVDVTLAVAAEVNKEEQNLGIVIDAYGAGSFMVATKIKGMVAAEVSDERSAYMTRGHNNSRMITMGAQLVGDELAKNIAKGFVNGKYDGGRHQIRVDMLNKMG.

This sequence belongs to the LacAB/RpiB family. Heteromultimeric protein consisting of LacA and LacB.

It carries out the reaction aldehydo-D-galactose 6-phosphate = keto-D-tagatose 6-phosphate. It functions in the pathway carbohydrate metabolism; D-galactose 6-phosphate degradation; D-tagatose 6-phosphate from D-galactose 6-phosphate: step 1/1. The protein is Galactose-6-phosphate isomerase subunit LacA of Streptococcus pneumoniae (strain ATCC 700669 / Spain 23F-1).